Reading from the N-terminus, the 827-residue chain is Periplasmic nitrate reductase (827 aa).

A signal peptide (tat-type signal) is located at residues 1–34 (MSLTRRDFIKANAVPATAAAAGLATPAIAQPAKA). Positions 36 to 92 (IRWDKGVCRFCGTGCSVLVGVQDGRVVATQGDPDSPVNRGLNCIKGYFLSKIMYGED) constitute a 4Fe-4S Mo/W bis-MGD-type domain. Residues Cys-43, Cys-46, Cys-50, and Cys-78 each coordinate [4Fe-4S] cluster. Mo-bis(molybdopterin guanine dinucleotide) is bound by residues Lys-80, Gln-148, Asn-173, Cys-177, 210-217 (WGSNMAEM), 241-245 (STFEH), 260-262 (QTD), Met-371, Gln-375, Asn-481, 507-508 (SD), Lys-530, Asp-557, and 717-726 (TGRVLEHWHS). A substrate-binding site is contributed by Phe-793. Asn-801 and Lys-818 together coordinate Mo-bis(molybdopterin guanine dinucleotide).

Belongs to the prokaryotic molybdopterin-containing oxidoreductase family. NasA/NapA/NarB subfamily. As to quaternary structure, component of the periplasmic nitrate reductase NapAB complex composed of NapA and NapB. [4Fe-4S] cluster serves as cofactor. It depends on Mo-bis(molybdopterin guanine dinucleotide) as a cofactor. Post-translationally, predicted to be exported by the Tat system. The position of the signal peptide cleavage has not been experimentally proven.

It localises to the periplasm. It carries out the reaction 2 Fe(II)-[cytochrome] + nitrate + 2 H(+) = 2 Fe(III)-[cytochrome] + nitrite + H2O. Its function is as follows. Catalytic subunit of the periplasmic nitrate reductase complex NapAB. Receives electrons from NapB and catalyzes the reduction of nitrate to nitrite. The protein is Periplasmic nitrate reductase of Paramagnetospirillum magnetotacticum (Aquaspirillum magnetotacticum).